The primary structure comprises 540 residues: Cytochrome P450 monooxygenase ORF5 (540 aa).

Residues 48–68 (YHALGTAIALFACACAYALVA) form a helical membrane-spanning segment. Residues asparagine 376 and asparagine 460 are each glycosylated (N-linked (GlcNAc...) asparagine). Cysteine 483 is a binding site for heme.

The protein belongs to the cytochrome P450 family. Heme serves as cofactor.

It is found in the membrane. The protein operates within sesquiterpene biosynthesis. In terms of biological role, cytochrome P450 monooxygenase; part of the gene cluster that mediates the biosynthesis of PR-toxin, a bicyclic sesquiterpene belonging to the eremophilane class and acting as a mycotoxin. The first step of the pathway is catalyzed by the aristolochene synthase which performs the cyclization of trans,trans-farnesyl diphosphate (FPP) to the bicyclic sesquiterpene aristolochene. Following the formation of aristolochene, the non-oxygenated aristolochene is converted to the trioxygenated intermediate eremofortin B, via 7-epi-neopetasone. This conversion appears to involve three enzymes, a hydroxysterol oxidase-like enzyme, the quinone-oxidase prx3 that forms the quinone-type-structure in the bicyclic nucleus of aristolochene with the C8-oxo group and the C-3 hydroxyl group, and the P450 monooxygenase ORF6 that introduces the epoxide at the double bond between carbons 1 and 2. No monoxy or dioxy-intermediates have been reported to be released to the broth, so these three early oxidative reactions may be coupled together. Eremofortin B is further oxidized by another P450 monooxygenase, that introduces a second epoxide between carbons 7 and 11 prior to acetylation to eremofortin A by the acetyltransferase ORF8. The second epoxidation may be performed by a second P450 monooxygenase. After the acetylation step, eremofortin A is converted to eremofortin C and then to PR-toxin. First the conversion of eremofortin A to eremofortin C proceeds by oxidation of the side chain of the molecule at C-12 and is catalyzed by the short-chain oxidoreductase prx1. The cytochrome P450 monooxygenase ORF6 is probably also involved in this step. The primary alcohol formed at C-12 is finally oxidized by the short-chain alcohol dehydrogenase prx4 that forms PR-toxin. In Penicillium roqueforti (strain FM164), this protein is Cytochrome P450 monooxygenase ORF5.